Consider the following 100-residue polypeptide: Nucleoid-associated protein jhp_0031 (100 aa).

It belongs to the YbaB/EbfC family. As to quaternary structure, homodimer.

It is found in the cytoplasm. The protein resides in the nucleoid. In terms of biological role, binds to DNA and alters its conformation. May be involved in regulation of gene expression, nucleoid organization and DNA protection. The polypeptide is Nucleoid-associated protein jhp_0031 (Helicobacter pylori (strain J99 / ATCC 700824) (Campylobacter pylori J99)).